The primary structure comprises 193 residues: Transcriptional repressor NrdR (193 aa).

A zinc finger lies at 3 to 34; the sequence is CPYCGGLDTQVKDSRPSEDASAIRRRRICPDC. The 91-residue stretch at 49 to 139 folds into the ATP-cone domain; that stretch reads LTVVKRSGRK…VYKNFREAKD (91 aa). The disordered stretch occupies residues 150-193; it reads DQQDGAVPQAEADRPIGAGPPSEAAQPAAGEGGDAPMRRARSRA.

Belongs to the NrdR family. Zn(2+) is required as a cofactor.

In terms of biological role, negatively regulates transcription of bacterial ribonucleotide reductase nrd genes and operons by binding to NrdR-boxes. The polypeptide is Transcriptional repressor NrdR (Methylobacterium nodulans (strain LMG 21967 / CNCM I-2342 / ORS 2060)).